The chain runs to 1200 residues: PAN2-PAN3 deadenylation complex catalytic subunit Pan2 (1200 aa).

WD repeat units follow at residues 153 to 193 (DENE…QKYA), 195 to 231 (ETPG…VEHE), 244 to 280 (VHGN…AITP), and 328 to 367 (PVGP…SFNP). A linker region spans residues 368-484 (YSRETEFALP…PTGREEEPLH (117 aa)). The USP domain occupies 485–923 (TVSKKYRKVT…VPAILYYVKR (439 aa)). The residue at position 784 (S784) is a Phosphoserine. The region spanning 974–1146 (VGLDAEFVTL…EDARTALQLY (173 aa)) is the Exonuclease domain. Residues D977, E979, D1086, and D1138 each coordinate a divalent metal cation. S1188 carries the phosphoserine modification.

Belongs to the peptidase C19 family. PAN2 subfamily. In terms of assembly, forms a heterotrimer with an asymmetric homodimer of the regulatory subunit PAN3 to form the poly(A)-nuclease (PAN) deadenylation complex. Interacts with PAN3 isoform 1/Pan3L and isoform 3/Pan3S. Interacts with ZFP36. Requires a divalent metal cation as cofactor.

Its subcellular location is the cytoplasm. It localises to the P-body. It is found in the nucleus. The catalysed reaction is Exonucleolytic cleavage of poly(A) to 5'-AMP.. Its activity is regulated as follows. Positively regulated by the regulatory subunit PAN3. Functionally, catalytic subunit of the poly(A)-nuclease (PAN) deadenylation complex, one of two cytoplasmic mRNA deadenylases involved in general and miRNA-mediated mRNA turnover. PAN specifically shortens poly(A) tails of RNA and the activity is stimulated by poly(A)-binding protein (PABP). PAN deadenylation is followed by rapid degradation of the shortened mRNA tails by the CCR4-NOT complex. Deadenylated mRNAs are then degraded by two alternative mechanisms, namely exosome-mediated 3'-5' exonucleolytic degradation, or deadenylation-dependent mRNA decaping and subsequent 5'-3' exonucleolytic degradation by XRN1. Also acts as an important regulator of the HIF1A-mediated hypoxic response. Required for HIF1A mRNA stability independent of poly(A) tail length regulation. The chain is PAN2-PAN3 deadenylation complex catalytic subunit Pan2 from Mus musculus (Mouse).